The chain runs to 360 residues: Glycerol-3-phosphate dehydrogenase [NAD(+)], cytoplasmic (360 aa).

NAD(+) contacts are provided by residues Gly11–Gly16, Phe98, Lys121, and Ala155. Lys121 lines the substrate pocket. Residue Lys206 is the Proton acceptor of the active site. 2 residues coordinate NAD(+): Arg270 and Gln299. Arg270–Asn271 is a substrate binding site.

This sequence belongs to the NAD-dependent glycerol-3-phosphate dehydrogenase family. As to quaternary structure, homodimer.

The protein resides in the cytoplasm. It catalyses the reaction sn-glycerol 3-phosphate + NAD(+) = dihydroxyacetone phosphate + NADH + H(+). It functions in the pathway phospholipid metabolism; alpha-glycerophosphate cycle. This is Glycerol-3-phosphate dehydrogenase [NAD(+)], cytoplasmic (Gpdh1) from Drosophila kanekoi (Fruit fly).